Consider the following 463-residue polypeptide: Glutamate--tRNA ligase 2 (463 aa).

Residues 10-20 (PSPTGFLHIGS) carry the 'HIGH' region motif. Positions 239–243 (KLSKR) match the 'KMSKS' region motif. Residue Lys242 coordinates ATP.

This sequence belongs to the class-I aminoacyl-tRNA synthetase family. Glutamate--tRNA ligase type 1 subfamily. In terms of assembly, monomer.

Its subcellular location is the cytoplasm. It catalyses the reaction tRNA(Glu) + L-glutamate + ATP = L-glutamyl-tRNA(Glu) + AMP + diphosphate. Functionally, catalyzes the attachment of glutamate to tRNA(Glu) in a two-step reaction: glutamate is first activated by ATP to form Glu-AMP and then transferred to the acceptor end of tRNA(Glu). In Rickettsia felis (strain ATCC VR-1525 / URRWXCal2) (Rickettsia azadi), this protein is Glutamate--tRNA ligase 2.